The primary structure comprises 120 residues: Protein RALF-like 1 (120 aa).

An N-terminal signal peptide occupies residues 1–26; it reads MDKSFTLFLTLTILVVFIISSPPVQA. Positions 27-71 are cleaved as a propeptide — removed in mature form; that stretch reads GFANDLGGVAWATTGDNGSGCHGSIAECIGAEEEEMDSEINRRIL. N-linked (GlcNAc...) asparagine glycosylation occurs at asparagine 43. 2 disulfide bridges follow: cysteine 89–cysteine 99 and cysteine 112–cysteine 118.

This sequence belongs to the plant rapid alkalinization factor (RALF) family. As to quaternary structure, interacts with FER and promotes its phosphorylation and subsequent activation. In terms of processing, proteolytically cleaved, probably by S1P, a subtilisin-like serine protease (subtilase). Expressed in roots and stems.

The protein localises to the secreted. Its function is as follows. Cell signaling peptide that may regulate plant stress, growth, and development. Mediates a rapid alkalinization of extracellular space by mediating a transient increase in the cytoplasmic Ca(2+) concentration leading to a calcium-dependent signaling events through a cell surface receptor and a concomitant activation of some intracellular mitogen-activated protein kinases. Mostly active in roots. Prevents plant growth (e.g. root and leaf length). Suppresses cell elongation of the primary root by activating the cell surface receptor FER and triggering phosphorylation of AHA2 and subsequent extracellular alkalinization. The protein is Protein RALF-like 1 (RALF1) of Arabidopsis thaliana (Mouse-ear cress).